A 402-amino-acid polypeptide reads, in one-letter code: Multidrug resistance protein MdtH (402 aa).

The Cytoplasmic segment spans residues 1–12 (MSRVSQARNLGK). A helical transmembrane segment spans residues 13–33 (YFLLIDNMLVVLGFFVVFPLI). At 34–98 (SIRFVDQMGW…GFATMGIAHE (65 aa)) the chain is on the periplasmic side. A helical transmembrane segment spans residues 99-116 (PWLLWFSCFLSGLGGTLF). The Cytoplasmic segment spans residues 117 to 138 (DPPRSALVVKLIRPEQRGRFFS). Residues 139 to 159 (LLMMQDSAGAVIGALLGSWLL) form a helical membrane-spanning segment. Topologically, residues 160-164 (QYDFR) are periplasmic. A helical membrane pass occupies residues 165-185 (LVCATGAILFILCALFNAWLL). Over 186–213 (PAWKLSTVRTPVREGMRRVMSDKRFVTY) the chain is Cytoplasmic. A helical transmembrane segment spans residues 214-234 (VLTLAGYYMLAVQVMLMLPIM). The Periplasmic segment spans residues 235-243 (VNDIAGSPA). Residues 244-264 (AVKWMYAIEACLSLTLLYPIA) form a helical membrane-spanning segment. Residues 265–276 (RWSEKRFRLEHR) lie on the Cytoplasmic side of the membrane. A helical membrane pass occupies residues 277 to 297 (LMAGLLVMSLSMIPIGMVGNL). The Periplasmic portion of the chain corresponds to 298–299 (QQ). The helical transmembrane segment at 300 to 320 (LFTLICAFYIGSVIAEPARET) threads the bilayer. The Cytoplasmic segment spans residues 321–339 (LSASLADARARGSYMGFSR). Residues 340 to 360 (LGLAIGGAIGYIGGGWLFDMG) form a helical membrane-spanning segment. Over 361-367 (KALTQPE) the chain is Periplasmic. The helical transmembrane segment at 368-388 (LPWMMLGIIGFITFLALGWQF) threads the bilayer. Residues 389–402 (SHKRTPRRMLEPGA) lie on the Cytoplasmic side of the membrane.

This sequence belongs to the major facilitator superfamily. DHA1 family. MdtH (TC 2.A.1.2.21) subfamily.

It localises to the cell inner membrane. This is Multidrug resistance protein MdtH from Salmonella paratyphi B (strain ATCC BAA-1250 / SPB7).